The following is a 264-amino-acid chain: Thiazole synthase (264 aa).

The active-site Schiff-base intermediate with DXP is the Lys-106. 1-deoxy-D-xylulose 5-phosphate is bound by residues Gly-167, Ala-193–Gly-194, and Asn-215–Thr-216.

Belongs to the ThiG family. As to quaternary structure, homotetramer. Forms heterodimers with either ThiH or ThiS.

It is found in the cytoplasm. It carries out the reaction [ThiS sulfur-carrier protein]-C-terminal-Gly-aminoethanethioate + 2-iminoacetate + 1-deoxy-D-xylulose 5-phosphate = [ThiS sulfur-carrier protein]-C-terminal Gly-Gly + 2-[(2R,5Z)-2-carboxy-4-methylthiazol-5(2H)-ylidene]ethyl phosphate + 2 H2O + H(+). Its pathway is cofactor biosynthesis; thiamine diphosphate biosynthesis. In terms of biological role, catalyzes the rearrangement of 1-deoxy-D-xylulose 5-phosphate (DXP) to produce the thiazole phosphate moiety of thiamine. Sulfur is provided by the thiocarboxylate moiety of the carrier protein ThiS. In vitro, sulfur can be provided by H(2)S. The protein is Thiazole synthase of Stenotrophomonas maltophilia (strain R551-3).